Reading from the N-terminus, the 1052-residue chain is Focal adhesion kinase 1 (1052 aa).

The disordered stretch occupies residues 1–27 (MAAAYLDPNLNHTPSSSTKTHLGTGME). Ala-2 bears the N-acetylalanine mark. Tyr-5 carries the phosphotyrosine modification. The segment covering 10-21 (LNHTPSSSTKTH) has biased composition (polar residues). Thr-13 is subject to Phosphothreonine. Ser-29 and Ser-54 each carry phosphoserine. Residues 35 to 355 (RVLKVFHYFE…GYCRLVNGAT (321 aa)) enclose the FERM domain. Lys-152 is covalently cross-linked (Glycyl lysine isopeptide (Lys-Gly) (interchain with G-Cter in SUMO)). Residues Tyr-397 and Tyr-407 each carry the phosphotyrosine modification. Phosphotyrosine; by autocatalysis is present on Tyr-397. ATP contacts are provided by residues 428-434 (IGEGQFG), Lys-454, and 500-502 (ELC). Residues 431–680 (GQFGDVHQGV…ELKAQLSTIL (250 aa)) enclose the Protein kinase domain. Asp-546 (proton acceptor) is an active-site residue. Phosphotyrosine is present on Tyr-570. A phosphotyrosine; by RET and SRC mark is found at Tyr-576 and Tyr-577. The residue at position 580 (Ser-580) is a Phosphoserine. Positions 685–697 (VQQEERMRMESRR) are enriched in basic and acidic residues. 2 disordered regions span residues 685 to 734 (VQQE…PSPQ) and 837 to 921 (VRLS…DRSN). The interaction with TGFB1I1 stretch occupies residues 707–1052 (GSDEAPPKPS…LKMLGQTRPH (346 aa)). The residue at position 722 (Ser-722) is a Phosphoserine. The residue at position 732 (Ser-732) is a Phosphoserine; by CDK5. A compositionally biased stretch (basic and acidic residues) spans 837–849 (VRLSRGSIDREDG). Ser-843 carries the post-translational modification Phosphoserine. A Phosphotyrosine modification is found at Tyr-861. Over residues 869 to 880 (PAAPPKKPPRPG) the composition is skewed to pro residues. The segment covering 886–896 (SNLSSISSPAD) has biased composition (polar residues). Position 910 is a phosphoserine (Ser-910). The tract at residues 912-1052 (PPTANLDRSN…LKMLGQTRPH (141 aa)) is interaction with ARHGEF28. Thr-914 is modified (phosphothreonine). At Tyr-925 the chain carries Phosphotyrosine; by SRC.

The protein belongs to the protein kinase superfamily. Tyr protein kinase family. FAK subfamily. In terms of assembly, interacts with GIT1. Component of a complex that contains at least FER, CTTN and PTK2/FAK1. Interacts with BMX. Interacts with STEAP4. Interacts with ZFYVE21. Interacts with ESR1. Interacts with FGR, FLT4 and RET. Interacts with EPHA2 in resting cells; activation of EPHA2 recruits PTPN11, leading to dephosphorylation of PTK2/FAK1 and dissociation of the complex. Interacts with EPHA1 (kinase activity-dependent). Interacts with MISP. Interacts with PIAS1. Interacts with ARHGAP26 and SHC1. Interacts with RB1CC1; this inhibits PTK2/FAK1 activity and activation of downstream signaling pathways. Interacts with P53/TP53. Interacts with STAT1. Interacts with WASL. Interacts with ARHGEF7. Interacts with DCC. Interacts (via first Pro-rich region) with CAS family members (via SH3 domain), including BCAR1, BCAR3 and CASS4. Interacts with NEDD9 (via C-terminus). Interacts with SORBS1. Interacts with ARHGEF28. Interacts with SHB. Part of a complex composed of THSD1, PTK2/FAK1, TLN1 and VCL. Interacts with PXN and TLN1. Interacts with TGFB1I1. Interacts with PIK3R1 or PIK3R2. Interacts with SRC, GRB2 and GRB7. Interacts with LPXN (via LD motif 3). Interacts with CD36. Interacts with EMP2; regulates PTK2 activation and localization. Interacts with DSCAM. Interacts with AMBRA1. Interacts (when tyrosine-phosphorylated) with tensin TNS1; the interaction is increased by phosphorylation of TNS1. Post-translationally, phosphorylated on tyrosine residues upon activation, e.g. upon integrin signaling. Tyr-397 is the major autophosphorylation site, but other kinases can also phosphorylate this residue. Phosphorylation at Tyr-397 promotes interaction with SRC and SRC family members, leading to phosphorylation at Tyr-576, Tyr-577 and at additional tyrosine residues. FGR promotes phosphorylation at Tyr-397 and Tyr-576. FER promotes phosphorylation at Tyr-577, Tyr-861 and Tyr-925, even when cells are not adherent. Tyr-397, Tyr-576 and Ser-722 are phosphorylated only when cells are adherent. Phosphorylation at Tyr-397 is important for interaction with BMX, PIK3R1 and SHC1. Phosphorylation at Tyr-925 is important for interaction with GRB2. Dephosphorylated by PTPN11; PTPN11 is recruited to PTK2 via EPHA2 (tyrosine phosphorylated). Microtubule-induced dephosphorylation at Tyr-397 is crucial for the induction of focal adhesion disassembly; this dephosphorylation could be catalyzed by PTPN11 and regulated by ZFYVE21. Phosphorylation on tyrosine residues is enhanced by NTN1. Sumoylated; this enhances autophosphorylation.

Its subcellular location is the cell junction. It localises to the focal adhesion. It is found in the cell membrane. The protein resides in the cytoplasm. The protein localises to the perinuclear region. Its subcellular location is the cell cortex. It localises to the cytoskeleton. It is found in the microtubule organizing center. The protein resides in the centrosome. The protein localises to the nucleus. Its subcellular location is the cilium basal body. The enzyme catalyses L-tyrosyl-[protein] + ATP = O-phospho-L-tyrosyl-[protein] + ADP + H(+). Its activity is regulated as follows. Subject to autoinhibition, mediated by interactions between the FERM domain and the kinase domain. Activated by autophosphorylation at Tyr-397. This promotes interaction with SRC and phosphorylation at Tyr-576 and Tyr-577 in the kinase activation loop by SRC. Phosphorylation at Tyr-397, Tyr-576 and Tyr-577 is required for maximal kinase activity. Non-receptor protein-tyrosine kinase that plays an essential role in regulating cell migration, adhesion, spreading, reorganization of the actin cytoskeleton, formation and disassembly of focal adhesions and cell protrusions, cell cycle progression, cell proliferation and apoptosis. Required for early embryonic development and placenta development. Required for embryonic angiogenesis, normal cardiomyocyte migration and proliferation, and normal heart development. Regulates axon growth and neuronal cell migration, axon branching and synapse formation; required for normal development of the nervous system. Plays a role in osteogenesis and differentiation of osteoblasts. Functions in integrin signal transduction, but also in signaling downstream of numerous growth factor receptors, G-protein coupled receptors (GPCR), EPHA2, netrin receptors and LDL receptors. Forms multisubunit signaling complexes with SRC and SRC family members upon activation; this leads to the phosphorylation of additional tyrosine residues, creating binding sites for scaffold proteins, effectors and substrates. Regulates numerous signaling pathways. Promotes activation of phosphatidylinositol 3-kinase and the AKT1 signaling cascade. Promotes activation of MAPK1/ERK2, MAPK3/ERK1 and the MAP kinase signaling cascade. Promotes localized and transient activation of guanine nucleotide exchange factors (GEFs) and GTPase-activating proteins (GAPs), and thereby modulates the activity of Rho family GTPases. Signaling via CAS family members mediates activation of RAC1. Phosphorylates NEDD9 following integrin stimulation. Recruits the ubiquitin ligase MDM2 to P53/TP53 in the nucleus, and thereby regulates P53/TP53 activity, P53/TP53 ubiquitination and proteasomal degradation. Phosphorylates SRC; this increases SRC kinase activity. Phosphorylates ACTN1, ARHGEF7, GRB7, RET and WASL. Promotes phosphorylation of PXN and STAT1; most likely PXN and STAT1 are phosphorylated by a SRC family kinase that is recruited to autophosphorylated PTK2/FAK1, rather than by PTK2/FAK1 itself. Promotes phosphorylation of BCAR1; GIT2 and SHC1; this requires both SRC and PTK2/FAK1. Promotes phosphorylation of BMX and PIK3R1. In terms of biological role, does not contain a kinase domain and inhibits PTK2/FAK1 phosphorylation and signaling. Its enhanced expression can attenuate the nuclear accumulation of LPXN and limit its ability to enhance serum response factor (SRF)-dependent gene transcription. The chain is Focal adhesion kinase 1 from Mus musculus (Mouse).